The chain runs to 701 residues: Aryl hydrocarbon receptor repressor (701 aa).

Positions 1–38 (MMIPSGECTYAGRKRRKPIQKRRLTMGTEKSNPSKRHR) are disordered. Over residues 12-24 (GRKRRKPIQKRRL) the composition is skewed to basic residues. A bHLH domain is found at 25-78 (TMGTEKSNPSKRHRDRLNTELDHLASLLPFSPDIISKLDKLSVLRLSVSYLRVK). A PAS domain is found at 106 to 176 (PVQEGRLLLE…RQLHWAMDPP (71 aa)). 2 disordered regions span residues 360 to 389 (DPKG…QREM) and 409 to 436 (TEQR…LVPH). Positions 365 to 375 (SGDREEDDQKH) are enriched in basic and acidic residues. Residues 414 to 430 (QEGTTKLTRQPSKSEPS) show a composition bias toward polar residues. The segment at 555-701 (ASTTSCVWLG…SKGSDGIFLP (147 aa)) is needed for transcriptional repression. Glycyl lysine isopeptide (Lys-Gly) (interchain with G-Cter in SUMO2) cross-links involve residues Lys583 and Lys660.

Interacts with ARNT, ANKRA2, HDAC4 and HDAC5. Interacts with ARNT; forms a heterodimer with ARNT. In terms of tissue distribution, highly expressed in testis and weakly expressed in heart and liver. Highly expressed in small intestine and cecum in a male-dominant sexual dimorphic fashion.

It is found in the cytoplasm. Its subcellular location is the nucleus. In terms of biological role, mediates dioxin toxicity and is involved in regulation of cell growth and differentiation. Represses the transcription activity of AHR by competing with this transcription factor for heterodimer formation with the ARNT and subsequently binding to the xenobiotic response element (XRE) sequence present in the promoter regulatory region of variety of genes. Represses CYP1A1 by binding the XRE sequence and recruiting ANKRA2, HDAC4 and/or HDAC5. Autoregulates its expression by associating with its own XRE site. The protein is Aryl hydrocarbon receptor repressor (Ahrr) of Rattus norvegicus (Rat).